The following is a 93-amino-acid chain: uncharacterized protein (93 aa).

The protein belongs to the SIMIBI class G3E GTPase family. ArgK/MeaB subfamily.

This is an uncharacterized protein from Streptomyces virginiae (Streptomyces cinnamonensis).